The chain runs to 485 residues: Acyltransferase cm3D (485 aa).

The active-site Proton acceptor is the histidine 169.

Belongs to the plant acyltransferase family. Monomer.

Its pathway is secondary metabolite biosynthesis. In terms of biological role, acyltransferase; part of the gene cluster that mediates the biosynthesis of beauveriolides I and III, cyclodepsipeptides acting as inhibitors of the acyl-CoA:cholesterol acyltransferase. The HR-PKS cm3B initiates the biosynthesis of beauveriolides by iteratively catalyzing the formation of the linear polyketide chain. The ATP-dependent acetyl-CoA ligase cm3D converts the polyketide carboxylic acid to a CoA thioester which id shuttled to the first T domain in the NRPS cm3A by the acetyltransferase cm3C. Cm3A contains 13 domains and assembles the polyketide chain, L-phenylalanine, L-alanine, and D-leucine (or D-allo-isoleucine) to form beauveriolide I (or beauveriolide III). The production of both beauveriolides I and III suggests the substrate adaptability of cm3B, using different amino acids as substrates. The chain is Acyltransferase cm3D from Cordyceps militaris (strain CM01) (Caterpillar fungus).